The following is a 754-amino-acid chain: ToMV resistance protein Tm-1(GCR237) (754 aa).

The segment at 1–201 is N-terminal inhibitory domain NN; sequence MATAQSNSPR…AGMVIGRLES (201 aa). ATP contacts are provided by residues 18–20, threonine 55, arginine 92, and 124–127; these read DTK and GSGG. An N-terminal inhibitory domain NC region spans residues 211 to 431; that stretch reads KFTVGVTMFG…VDSFLEISPK (221 aa).

This sequence belongs to the UPF0261 family. Homodimer. As to quaternary structure, (Microbial infection) Binds, via an ATP bridge, to the tobamoviruses avirulent (Avr) replication proteins (large and small subunits, e.g. tomato mosaic virus (ToMV/TMV) AC P03587, tobacco mild green mosaic virus (TMGMV) AC P18339 and pepper mild mottle virus (PMMoV) AC P89657) to inhibit their function after the translation of tobamoviruses RNA, but before the viral replication complex formation on the membrane surfaces; this interaction is not possible with resistance-breaking strains replication proteins.

In terms of biological role, inhibitor of viral RNA replication which confers resistance to some tobamoviruses including tomato mosaic virus (ToMV) (e.g. isolate L), tobacco mosaic virus (TMV), tobacco mild green mosaic virus (TMGMV) and pepper mild mottle virus (PMMoV), but not to resistance-breaking isolates of ToMV (e.g. LT1, SL-1 and ToMV1-2) and tomato brown rugose fruit virus (ToBRFV). Prevents tobamoviruses RNA replication by affecting the association of tobamoviruses replication proteins (large and small subunits) with host membrane-associated proteins (e.g. TOM1, TOM2A and ARL8), thus inhibiting the replication complex formation on the membranes and avoiding viral negative-strand RNA synthesis. Inhibits triphosphatase activity of ToMV replication proteins. The chain is ToMV resistance protein Tm-1(GCR237) from Solanum lycopersicum (Tomato).